The following is a 306-amino-acid chain: Dirigent protein 24 (306 aa).

Positions 1 to 21 are cleaved as a signal peptide; that stretch reads MAKALSLTIFLFLLIASNVQS. Positions 36–61 are disordered; sequence PQVPEEEDDSPQAVTTTPTPIPLPGP.

It belongs to the plant dirigent protein family. In terms of assembly, homodimer.

Its subcellular location is the secreted. It is found in the extracellular space. It localises to the apoplast. In terms of biological role, dirigent proteins impart stereoselectivity on the phenoxy radical-coupling reaction, yielding optically active lignans from two molecules of coniferyl alcohol in the biosynthesis of lignans, flavonolignans, and alkaloids and thus plays a central role in plant secondary metabolism. In Arabidopsis thaliana (Mouse-ear cress), this protein is Dirigent protein 24 (DIR24).